Consider the following 342-residue polypeptide: tRNA N6-adenosine threonylcarbamoyltransferase (342 aa).

Fe cation contacts are provided by histidine 111 and histidine 115. Substrate-binding positions include leucine 134–glycine 138, aspartate 167, glycine 180, and asparagine 277. Aspartate 305 lines the Fe cation pocket.

The protein belongs to the KAE1 / TsaD family. The cofactor is Fe(2+).

It is found in the cytoplasm. It carries out the reaction L-threonylcarbamoyladenylate + adenosine(37) in tRNA = N(6)-L-threonylcarbamoyladenosine(37) in tRNA + AMP + H(+). Its function is as follows. Required for the formation of a threonylcarbamoyl group on adenosine at position 37 (t(6)A37) in tRNAs that read codons beginning with adenine. Is involved in the transfer of the threonylcarbamoyl moiety of threonylcarbamoyl-AMP (TC-AMP) to the N6 group of A37, together with TsaE and TsaB. TsaD likely plays a direct catalytic role in this reaction. This chain is tRNA N6-adenosine threonylcarbamoyltransferase, found in Histophilus somni (strain 2336) (Haemophilus somnus).